The following is an 815-amino-acid chain: Kinesin heavy chain (815 aa).

A Kinesin motor domain is found at 11–329 (GVQVFCRIRP…LLFGARAKTI (319 aa)). 88–95 (GQTSSGKT) contacts ATP. Coiled coils occupy residues 335 to 374 (INEE…RWRA), 422 to 554 (PITD…LDEC), and 695 to 785 (PAQK…RMNA). The tract at residues 788-815 (IVKPIRPGQVYTSPSAGMSQGAPNGSNA) is disordered. The segment covering 797–815 (VYTSPSAGMSQGAPNGSNA) has biased composition (polar residues).

Belongs to the TRAFAC class myosin-kinesin ATPase superfamily. Kinesin family. Kinesin subfamily. Oligomer composed of two heavy chains and two light chains.

The protein localises to the cytoplasm. It is found in the cytoskeleton. Microtubule-dependent motor protein required for organelle transport. Plays a role in endosome transport. Required for the transport of mitochondria along the axon of motor neurons. Involved in the nuclear migration of hyp7 hypodermal precursor cells. Required for the formation of dendritic branches of PVD sensory neurons. In non-ciliated neurons such as the PVD and PHC neurons, required for the organization of minus-end out microtubules in dendrites. Also required for the minus-end out orientation of microtubules in dendrites of AQR gas-sensing neurons. Involved in the localization of unc-33 to neurites. Positively regulates cilium position and dendrite morphogenesis in the postembryonic AQR and PQR gas-sensing neurons. Plays a more prominent role in regulating dendrite morphogenesis in AQR than in PQR neurons. Plays a role in regulating the localization of grdn-1 to the distal dendrites of AQR sensory neurons. The protein is Kinesin heavy chain of Caenorhabditis elegans.